A 1037-amino-acid polypeptide reads, in one-letter code: Exportin-T (1037 aa).

The protein belongs to the exportin family.

It localises to the nucleus. Its subcellular location is the cytoplasm. Functionally, tRNA nucleus export receptor which facilitates tRNA translocation across the nuclear pore complex. Involved in pre-tRNA splicing, probably by affecting the interaction of pre-tRNA with splicing endonuclease. In Neosartorya fischeri (strain ATCC 1020 / DSM 3700 / CBS 544.65 / FGSC A1164 / JCM 1740 / NRRL 181 / WB 181) (Aspergillus fischerianus), this protein is Exportin-T (los1).